The following is a 283-amino-acid chain: Thymidylate synthase (283 aa).

Residues Arg31 and 145–146 (RR) contribute to the dUMP site. Residue Cys165 is the Nucleophile of the active site. DUMP-binding positions include 185–188 (RSAD), Asn196, and 226–228 (HIY). Asp188 contributes to the (6R)-5,10-methylene-5,6,7,8-tetrahydrofolate binding site. Residue Ser282 participates in (6R)-5,10-methylene-5,6,7,8-tetrahydrofolate binding.

This sequence belongs to the thymidylate synthase family. Bacterial-type ThyA subfamily. In terms of assembly, homodimer.

The protein localises to the cytoplasm. It carries out the reaction dUMP + (6R)-5,10-methylene-5,6,7,8-tetrahydrofolate = 7,8-dihydrofolate + dTMP. It participates in pyrimidine metabolism; dTTP biosynthesis. Catalyzes the reductive methylation of 2'-deoxyuridine-5'-monophosphate (dUMP) to 2'-deoxythymidine-5'-monophosphate (dTMP) while utilizing 5,10-methylenetetrahydrofolate (mTHF) as the methyl donor and reductant in the reaction, yielding dihydrofolate (DHF) as a by-product. This enzymatic reaction provides an intracellular de novo source of dTMP, an essential precursor for DNA biosynthesis. This chain is Thymidylate synthase, found in Symbiobacterium thermophilum (strain DSM 24528 / JCM 14929 / IAM 14863 / T).